Reading from the N-terminus, the 555-residue chain is Synaptotagmin-14 (555 aa).

Residues 1-24 lie on the Extracellular side of the membrane; that stretch reads MAIEGGERTCGVHELICIRKVSPE. Residues 25–47 form a helical; Signal-anchor for type III membrane protein membrane-spanning segment; sequence AVGFLSAVGVFIVLMLLLFLYIN. Residues 48–555 lie on the Cytoplasmic side of the membrane; the sequence is KKFCFENVGG…VCRWHALLES (508 aa). Disordered regions lie at residues 76-97, 157-179, and 205-258; these read YNSY…EALG, TPPL…HLSC, and CPSE…PEPE. Positions 211 to 224 are enriched in basic and acidic residues; sequence TGHEAESYHNKGYE. 2 consecutive C2 domains span residues 260 to 379 and 415 to 550; these read KYGT…SLPV and SVPE…CRWH.

It belongs to the synaptotagmin family. In terms of assembly, homodimer. Can also form heterodimers. As to expression, expressed in heart and testis. Expressed in brain (especially in the cerebellum).

Its subcellular location is the membrane. Its function is as follows. May be involved in the trafficking and exocytosis of secretory vesicles in non-neuronal tissues. Is Ca(2+)-independent. The polypeptide is Synaptotagmin-14 (Syt14) (Mus musculus (Mouse)).